A 426-amino-acid polypeptide reads, in one-letter code: Tubby protein homolog 1 (426 aa).

A required for localization to cilia in AWB sensory neurons region spans residues 16–28; that stretch reads QRKMLEDKQKQKR. Residues 19-39 form a disordered region; the sequence is MLEDKQKQKRHQSAGSVRTTS.

The protein belongs to the TUB family. Interacts with rgb-3. As to expression, expressed in ciliated sensory neurons.

The protein localises to the cytoplasm. It is found in the cell projection. The protein resides in the axon. It localises to the dendrite. Its subcellular location is the cilium. Has a role in fat regulation independent of daf-16. Implicated in ciliar sensory function which is required for normal sensory behavior such as chemotaxis. Required for extension and growth of sensory neuronal cilia during postembryonic development, potentially via mediating signaling protein transport and localization of PI(4,5)P2 to the ciliary base. Functions in life span control via the insulin/IGF-1 pathway. Thought to be involved in neuronal trafficking. The polypeptide is Tubby protein homolog 1 (Caenorhabditis elegans).